The sequence spans 631 residues: Glutamyl-tRNA(Gln) amidotransferase subunit E (631 aa).

The protein belongs to the GatB/GatE family. GatE subfamily. In terms of assembly, heterodimer of GatD and GatE.

It catalyses the reaction L-glutamyl-tRNA(Gln) + L-glutamine + ATP + H2O = L-glutaminyl-tRNA(Gln) + L-glutamate + ADP + phosphate + H(+). Functionally, allows the formation of correctly charged Gln-tRNA(Gln) through the transamidation of misacylated Glu-tRNA(Gln) in organisms which lack glutaminyl-tRNA synthetase. The reaction takes place in the presence of glutamine and ATP through an activated gamma-phospho-Glu-tRNA(Gln). The GatDE system is specific for glutamate and does not act on aspartate. The sequence is that of Glutamyl-tRNA(Gln) amidotransferase subunit E from Methanococcus maripaludis (strain C7 / ATCC BAA-1331).